A 177-amino-acid chain; its full sequence is Cytochrome c oxidase assembly protein CtaG (177 aa).

Over 1–8 (MTQKAKNT) the chain is Cytoplasmic. Residues 9–29 (IYLLILIILSMLCLVYASVPL) form a helical; Signal-anchor for type II membrane protein membrane-spanning segment. The Periplasmic portion of the chain corresponds to 30 to 177 (YSIFCKVTGY…TFFKYKENTK (148 aa)).

Belongs to the COX11/CtaG family.

It localises to the cell inner membrane. Its function is as follows. Exerts its effect at some terminal stage of cytochrome c oxidase synthesis, probably by being involved in the insertion of the copper B into subunit I. This is Cytochrome c oxidase assembly protein CtaG from Ehrlichia ruminantium (strain Welgevonden).